The sequence spans 279 residues: ESX-1 secretion-associated protein EspG1 (279 aa).

It belongs to the EspG family. As to quaternary structure, interacts specifically with ESX-1-dependent PE/PPE proteins.

It localises to the cytoplasm. Its function is as follows. Specific chaperone for cognate PE/PPE proteins. Plays an important role in preventing aggregation of PE/PPE dimers. This chain is ESX-1 secretion-associated protein EspG1, found in Mycobacterium marinum (strain ATCC BAA-535 / M).